We begin with the raw amino-acid sequence, 274 residues long: Bis(5'-nucleosyl)-tetraphosphatase, symmetrical (274 aa).

This sequence belongs to the Ap4A hydrolase family.

The enzyme catalyses P(1),P(4)-bis(5'-adenosyl) tetraphosphate + H2O = 2 ADP + 2 H(+). Hydrolyzes diadenosine 5',5'''-P1,P4-tetraphosphate to yield ADP. The chain is Bis(5'-nucleosyl)-tetraphosphatase, symmetrical from Shewanella sp. (strain MR-4).